A 209-amino-acid polypeptide reads, in one-letter code: Prolactin (209 aa).

An N-terminal signal peptide occupies residues 1–24 (MAQRFKGRSLFLTALLCLASQGYA). 2 cysteine pairs are disulfide-bonded: C70/C184 and C201/C209.

The protein belongs to the somatotropin/prolactin family.

The protein localises to the secreted. In Anguilla anguilla (European freshwater eel), this protein is Prolactin (prl).